The primary structure comprises 495 residues: Tubulin epsilon and delta complex protein 1 (495 aa).

Residues 355–387 (GGELDLVVRELQALEEELREAAERRRAAWEAKA) adopt a coiled-coil conformation. The segment at 417 to 440 (CWERDGGPAQPHGPHRLVRREDGA) is disordered. Residues 452 to 480 (IRTLRSQEACLEAVLRRLQGQCRQELARL) are a coiled coil.

Interacts with TEDC2. Found in a complex with TEDC1, TEDC2, TUBE1 and TUBD1.

It localises to the cell projection. The protein localises to the cilium. Its subcellular location is the cytoplasm. The protein resides in the cytoskeleton. It is found in the microtubule organizing center. It localises to the centrosome. The protein localises to the centriole. In terms of biological role, acts as a positive regulator of ciliary hedgehog signaling. Required for centriole stability. May play a role in counteracting perturbation of actin filaments, such as after treatment with the actin depolymerizing microbial metabolite Chivosazole F. The chain is Tubulin epsilon and delta complex protein 1 from Homo sapiens (Human).